Consider the following 101-residue polypeptide: Pro-corazonin (101 aa).

Residues 1–16 (MLVLFVLSLVVSCALC) form the signal peptide. An Asparagine amide modification is found at N27. Positions 31–101 (SNFPAEISAL…REKAPNNDNY (71 aa)) are excised as a propeptide.

This sequence belongs to the corazonin family. In terms of tissue distribution, expressed in central brain and the retrocerebral complex but not in antennal lobes, optic lobes or in gnathal, thoracic and abdominal ganglia (at protein level).

The protein resides in the secreted. In terms of biological role, cardioactive peptide. Corazonin is probably involved in the physiological regulation of the heart beat. This chain is Pro-corazonin, found in Camponotus floridanus (Florida carpenter ant).